The primary structure comprises 783 residues: ATP-dependent zinc metalloprotease FtsH (783 aa).

The span at 1 to 16 shows a compositional bias: low complexity; that stretch reads MSETPNTNEQNNPNNQ. The interval 1-79 is disordered; sequence MSETPNTNEQ…DKEEDFASRL (79 aa). At 1–86 the chain is on the cytoplasmic side; the sequence is MSETPNTNEQ…SRLNTRPPQR (86 aa). A compositionally biased stretch (basic and acidic residues) spans 35 to 61; the sequence is MPERPERHNQADGAPKRPGDDDRKSER. Residues 87–107 traverse the membrane as a helical segment; it reads ASIITIIIIFLVAFFIGSQMM. Over 108–233 the chain is Extracellular; sequence NMVHGEETDD…EYQVTLPSNV (126 aa). A helical membrane pass occupies residues 234–254; it reads TEILISVLPMLLFAGLLIYFF. The Cytoplasmic portion of the chain corresponds to 255 to 783; sequence SQMSKANNSQ…APQPPAAPQQ (529 aa). Residue 325 to 332 coordinates ATP; it reads GPPGTGKT. A Zn(2+)-binding site is contributed by H547. E548 is an active-site residue. Residues H551 and D623 each coordinate Zn(2+). Residues 738–771 show a composition bias toward low complexity; it reads EAAAKAADQAEQPQVEAEPVAQVATPAAPVAPAV. Residues 738 to 783 form a disordered region; it reads EAAAKAADQAEQPQVEAEPVAQVATPAAPVAPAVPEAPQPPAAPQQ. Residues 772–783 are compositionally biased toward pro residues; sequence PEAPQPPAAPQQ.

The protein in the central section; belongs to the AAA ATPase family. This sequence in the C-terminal section; belongs to the peptidase M41 family. Homohexamer. The cofactor is Zn(2+).

It localises to the cell membrane. Functionally, acts as a processive, ATP-dependent zinc metallopeptidase for both cytoplasmic and membrane proteins. Plays a role in the quality control of integral membrane proteins. This is ATP-dependent zinc metalloprotease FtsH from Slackia heliotrinireducens (strain ATCC 29202 / DSM 20476 / NCTC 11029 / RHS 1) (Peptococcus heliotrinreducens).